Here is a 522-residue protein sequence, read N- to C-terminus: Bifunctional purine biosynthesis protein PurH (522 aa).

One can recognise an MGS-like domain in the interval 1–143; that stretch reads MIRRALISVS…KNHARVAVVV (143 aa).

Belongs to the PurH family.

The enzyme catalyses (6R)-10-formyltetrahydrofolate + 5-amino-1-(5-phospho-beta-D-ribosyl)imidazole-4-carboxamide = 5-formamido-1-(5-phospho-D-ribosyl)imidazole-4-carboxamide + (6S)-5,6,7,8-tetrahydrofolate. It carries out the reaction IMP + H2O = 5-formamido-1-(5-phospho-D-ribosyl)imidazole-4-carboxamide. Its pathway is purine metabolism; IMP biosynthesis via de novo pathway; 5-formamido-1-(5-phospho-D-ribosyl)imidazole-4-carboxamide from 5-amino-1-(5-phospho-D-ribosyl)imidazole-4-carboxamide (10-formyl THF route): step 1/1. It participates in purine metabolism; IMP biosynthesis via de novo pathway; IMP from 5-formamido-1-(5-phospho-D-ribosyl)imidazole-4-carboxamide: step 1/1. This is Bifunctional purine biosynthesis protein PurH from Sorangium cellulosum (strain So ce56) (Polyangium cellulosum (strain So ce56)).